The primary structure comprises 317 residues: MQSPDGQETGRPAAILIAGPTASGKSALGLRIARAFGGTVINTDSMQVYADLRVLSARPTAEEEGLAPHRLYGSIDGAVNFSVGHFQRQAAALLSEMDAGSLPVFVGGTGLYFRSLDEGISDLPEVPDAVRQRIRIEADGQPTETLHAALALRDPESAERLRPSDRMRVMRALEIHAATGRSIGSFHEARVPGPLAGKPLLKLFLATEREALRQRIDARFVTMMEQGALDEVAALRERRLDPLLPVMRAHGVPGLIAHLDGTISRQEAIQRGQGDTRRYAKRQFTWFRHQMGEAWHWTTPEAAWSLVQARLSAPAGR.

19-26 contacts ATP; the sequence is GPTASGKS. 21-26 contacts substrate; it reads TASGKS. Positions 44-47 are interaction with substrate tRNA; it reads DSMQ.

It belongs to the IPP transferase family. Monomer. The cofactor is Mg(2+).

It carries out the reaction adenosine(37) in tRNA + dimethylallyl diphosphate = N(6)-dimethylallyladenosine(37) in tRNA + diphosphate. In terms of biological role, catalyzes the transfer of a dimethylallyl group onto the adenine at position 37 in tRNAs that read codons beginning with uridine, leading to the formation of N6-(dimethylallyl)adenosine (i(6)A). This chain is tRNA dimethylallyltransferase, found in Methylorubrum extorquens (strain PA1) (Methylobacterium extorquens).